Consider the following 252-residue polypeptide: Thiazole synthase (252 aa).

Catalysis depends on lysine 91, which acts as the Schiff-base intermediate with DXP. Residues glycine 152, 179–180 (AG), and 201–202 (NT) each bind 1-deoxy-D-xylulose 5-phosphate.

This sequence belongs to the ThiG family. As to quaternary structure, homotetramer. Forms heterodimers with either ThiH or ThiS.

The protein resides in the cytoplasm. The enzyme catalyses [ThiS sulfur-carrier protein]-C-terminal-Gly-aminoethanethioate + 2-iminoacetate + 1-deoxy-D-xylulose 5-phosphate = [ThiS sulfur-carrier protein]-C-terminal Gly-Gly + 2-[(2R,5Z)-2-carboxy-4-methylthiazol-5(2H)-ylidene]ethyl phosphate + 2 H2O + H(+). It functions in the pathway cofactor biosynthesis; thiamine diphosphate biosynthesis. In terms of biological role, catalyzes the rearrangement of 1-deoxy-D-xylulose 5-phosphate (DXP) to produce the thiazole phosphate moiety of thiamine. Sulfur is provided by the thiocarboxylate moiety of the carrier protein ThiS. In vitro, sulfur can be provided by H(2)S. The chain is Thiazole synthase from Erwinia amylovora (Fire blight bacteria).